Consider the following 713-residue polypeptide: Transcription activator of gluconeogenesis CPC735_053490 (713 aa).

A disordered region spans residues 1 to 70 (MTANAINGPV…NAKDPLRPRR (70 aa)). Positions 19–56 (GDNNKSADTTMADQGTRPESQPQGQNNGAKPQNGQTKP) are enriched in polar residues. Residues 77–105 (CFACQRAHLTCGDERPCQRCIKRGIQNAC) constitute a DNA-binding region (zn(2)-C6 fungal-type). The span at 145–159 (PLTRNGSNSKTNFYP) shows a compositional bias: polar residues. Disordered stretches follow at residues 145-229 (PLTR…ASGQ), 274-318 (GAGE…LFGD), 541-564 (GGSS…GMDI), and 623-665 (GTTS…QRKW). Over residues 160–171 (QQQSSFNNFYQN) the composition is skewed to low complexity. Polar residues predominate over residues 191–212 (FPSQSPVSPTFNMTANPAASGN). Positions 213 to 229 (QGLPSSLSASNSNASGQ) are enriched in low complexity. 3 stretches are compositionally biased toward polar residues: residues 295-312 (SGTY…TGQP), 541-558 (GGSS…SFTP), and 649-659 (GASNGQSQHSL).

It belongs to the ERT1/acuK family.

Its subcellular location is the nucleus. Its function is as follows. Transcription factor which regulates nonfermentable carbon utilization. Activator of gluconeogenetic genes. The protein is Transcription activator of gluconeogenesis CPC735_053490 of Coccidioides posadasii (strain C735) (Valley fever fungus).